The following is a 375-amino-acid chain: 4-hydroxy-3-methylbut-2-en-1-yl diphosphate synthase (flavodoxin) (375 aa).

Residues Cys-270, Cys-273, Cys-305, and Glu-312 each coordinate [4Fe-4S] cluster.

Belongs to the IspG family. The cofactor is [4Fe-4S] cluster.

It carries out the reaction (2E)-4-hydroxy-3-methylbut-2-enyl diphosphate + oxidized [flavodoxin] + H2O + 2 H(+) = 2-C-methyl-D-erythritol 2,4-cyclic diphosphate + reduced [flavodoxin]. It participates in isoprenoid biosynthesis; isopentenyl diphosphate biosynthesis via DXP pathway; isopentenyl diphosphate from 1-deoxy-D-xylulose 5-phosphate: step 5/6. Converts 2C-methyl-D-erythritol 2,4-cyclodiphosphate (ME-2,4cPP) into 1-hydroxy-2-methyl-2-(E)-butenyl 4-diphosphate. This chain is 4-hydroxy-3-methylbut-2-en-1-yl diphosphate synthase (flavodoxin), found in Yersinia pseudotuberculosis serotype IB (strain PB1/+).